The primary structure comprises 222 residues: Coiled-coil domain-containing protein 70 (222 aa).

Positions Asn-129–Trp-153 form a coiled coil.

This chain is Coiled-coil domain-containing protein 70, found in Homo sapiens (Human).